A 119-amino-acid polypeptide reads, in one-letter code: Nascent polypeptide-associated complex protein (119 aa).

The NAC-A/B domain occupies 5–73 (RMNSREMRRL…FRETPKKQEG (69 aa)).

Belongs to the NAC-alpha family. As to quaternary structure, homodimer. Interacts with the ribosome. Binds ribosomal RNA.

In terms of biological role, contacts the emerging nascent chain on the ribosome. This chain is Nascent polypeptide-associated complex protein, found in Thermoplasma volcanium (strain ATCC 51530 / DSM 4299 / JCM 9571 / NBRC 15438 / GSS1).